The chain runs to 156 residues: Arginine repressor (156 aa).

Belongs to the ArgR family.

It is found in the cytoplasm. It functions in the pathway amino-acid biosynthesis; L-arginine biosynthesis [regulation]. Functionally, regulates arginine biosynthesis genes. The chain is Arginine repressor from Vibrio campbellii (strain ATCC BAA-1116).